A 111-amino-acid chain; its full sequence is Probable 4-amino-4-deoxy-L-arabinose-phosphoundecaprenol flippase subunit ArnE (111 aa).

3 helical membrane passes run 38–58 (LWLG…LLVL), 61–81 (LPVG…TLAA), and 91–111 (PRHW…GSAA). One can recognise an EamA domain in the interval 40-109 (LGLALICMGA…IISGIIILGS (70 aa)).

It belongs to the ArnE family. In terms of assembly, heterodimer of ArnE and ArnF.

Its subcellular location is the cell inner membrane. Its pathway is bacterial outer membrane biogenesis; lipopolysaccharide biosynthesis. Functionally, translocates 4-amino-4-deoxy-L-arabinose-phosphoundecaprenol (alpha-L-Ara4N-phosphoundecaprenol) from the cytoplasmic to the periplasmic side of the inner membrane. In Salmonella enteritidis PT4 (strain P125109), this protein is Probable 4-amino-4-deoxy-L-arabinose-phosphoundecaprenol flippase subunit ArnE.